A 91-amino-acid polypeptide reads, in one-letter code: MSEKTTAQERNHRKVREGYVVSDKMDKTVVVAVENRFKHPLYGKIIRRTTKYKAHDEANIAGVGDRVRLMETRPLSATKRWRVVEILEKAK.

The protein belongs to the universal ribosomal protein uS17 family. Part of the 30S ribosomal subunit.

Its function is as follows. One of the primary rRNA binding proteins, it binds specifically to the 5'-end of 16S ribosomal RNA. In Thermobifida fusca (strain YX), this protein is Small ribosomal subunit protein uS17.